A 147-amino-acid chain; its full sequence is Protein-export protein SecB (147 aa).

Belongs to the SecB family. In terms of assembly, homotetramer, a dimer of dimers. One homotetramer interacts with 1 SecA dimer.

It is found in the cytoplasm. In terms of biological role, one of the proteins required for the normal export of preproteins out of the cell cytoplasm. It is a molecular chaperone that binds to a subset of precursor proteins, maintaining them in a translocation-competent state. It also specifically binds to its receptor SecA. This chain is Protein-export protein SecB, found in Neisseria meningitidis serogroup A / serotype 4A (strain DSM 15465 / Z2491).